Here is a 73-residue protein sequence, read N- to C-terminus: Toxin Td9 (73 aa).

The first 7 residues, 1 to 7 (IGMVAEC), serve as a signal peptide directing secretion. The LCN-type CS-alpha/beta domain maps to 8 to 70 (KDGYLVGDDG…IWNSATNSCG (63 aa)). 4 cysteine pairs are disulfide-bonded: Cys18-Cys69, Cys22-Cys44, Cys30-Cys50, and Cys34-Cys52. Lys71 carries the lysine amide modification.

This sequence belongs to the long (4 C-C) scorpion toxin superfamily. Sodium channel inhibitor family. Beta subfamily. Expressed by the venom gland.

Its subcellular location is the secreted. Functionally, beta toxins bind voltage-independently at site-4 of sodium channels (Nav) and shift the voltage of activation toward more negative potentials thereby affecting sodium channel activation and promoting spontaneous and repetitive firing. In Tityus discrepans (Venezuelan scorpion), this protein is Toxin Td9.